The sequence spans 302 residues: Phosphoribosylaminoimidazole-succinocarboxamide synthase (302 aa).

This sequence belongs to the SAICAR synthetase family.

It catalyses the reaction 5-amino-1-(5-phospho-D-ribosyl)imidazole-4-carboxylate + L-aspartate + ATP = (2S)-2-[5-amino-1-(5-phospho-beta-D-ribosyl)imidazole-4-carboxamido]succinate + ADP + phosphate + 2 H(+). It participates in purine metabolism; IMP biosynthesis via de novo pathway; 5-amino-1-(5-phospho-D-ribosyl)imidazole-4-carboxamide from 5-amino-1-(5-phospho-D-ribosyl)imidazole-4-carboxylate: step 1/2. This Cupriavidus metallidurans (strain ATCC 43123 / DSM 2839 / NBRC 102507 / CH34) (Ralstonia metallidurans) protein is Phosphoribosylaminoimidazole-succinocarboxamide synthase.